A 132-amino-acid chain; its full sequence is Small ribosomal subunit protein uS8 (132 aa).

This sequence belongs to the universal ribosomal protein uS8 family. In terms of assembly, part of the 30S ribosomal subunit. Contacts proteins S5 and S12.

In terms of biological role, one of the primary rRNA binding proteins, it binds directly to 16S rRNA central domain where it helps coordinate assembly of the platform of the 30S subunit. The chain is Small ribosomal subunit protein uS8 from Alkaliphilus oremlandii (strain OhILAs) (Clostridium oremlandii (strain OhILAs)).